The chain runs to 181 residues: UPF0397 protein STER_0346 (181 aa).

The next 5 membrane-spanning stretches (helical) occupy residues 11 to 31 (ATGIGAALFIIIGMFVNIPIF), 45 to 65 (LFSVIFGPITGFFMGFIGHAL), 72 to 92 (GNISWAWVLASGITGLVIGLF), 109 to 129 (IWFNLAQALGLLIGYGVVTPI), and 147 to 167 (FVAGVANFITIAIGGTLLLAI).

Belongs to the UPF0397 family.

It is found in the cell membrane. The polypeptide is UPF0397 protein STER_0346 (Streptococcus thermophilus (strain ATCC BAA-491 / LMD-9)).